We begin with the raw amino-acid sequence, 444 residues long: Tol-Pal system protein TolB (444 aa).

The first 19 residues, 1–19 (MRNIIYFILSLLFSVTSYA), serve as a signal peptide directing secretion.

Belongs to the TolB family. The Tol-Pal system is composed of five core proteins: the inner membrane proteins TolA, TolQ and TolR, the periplasmic protein TolB and the outer membrane protein Pal. They form a network linking the inner and outer membranes and the peptidoglycan layer.

Its subcellular location is the periplasm. Its function is as follows. Part of the Tol-Pal system, which plays a role in outer membrane invagination during cell division and is important for maintaining outer membrane integrity. This Rickettsia rickettsii (strain Iowa) protein is Tol-Pal system protein TolB.